A 347-amino-acid polypeptide reads, in one-letter code: NADH-ubiquinone oxidoreductase chain 2 (347 aa).

10 helical membrane-spanning segments follow: residues 3 to 23, 25 to 45, 66 to 86, 111 to 131, 149 to 169, 178 to 198, 201 to 221, 237 to 257, 274 to 294, and 325 to 345; these read PPIL…VMLS, HWLL…PILM, ASML…QWMI, FHFW…MILL, INTD…GWGG, IMAY…IYNP, MFLN…LFML, IPLI…LPPL, DMIV…YFYM, and LLPP…MMSI.

Belongs to the complex I subunit 2 family. Core subunit of respiratory chain NADH dehydrogenase (Complex I) which is composed of 45 different subunits. Interacts with TMEM242.

Its subcellular location is the mitochondrion inner membrane. It catalyses the reaction a ubiquinone + NADH + 5 H(+)(in) = a ubiquinol + NAD(+) + 4 H(+)(out). Its function is as follows. Core subunit of the mitochondrial membrane respiratory chain NADH dehydrogenase (Complex I) which catalyzes electron transfer from NADH through the respiratory chain, using ubiquinone as an electron acceptor. Essential for the catalytic activity and assembly of complex I. This is NADH-ubiquinone oxidoreductase chain 2 from Vulpes vulpes (Red fox).